Reading from the N-terminus, the 626-residue chain is ATP-dependent RNA helicase dbp-8 (626 aa).

Low complexity predominate over residues M1–A25. The interval M1 to P183 is disordered. Positions D40–N98 are enriched in acidic residues. Residues K161 to E173 are compositionally biased toward basic and acidic residues. The short motif at T195–K223 is the Q motif element. Positions I226–P406 constitute a Helicase ATP-binding domain. S239–T246 serves as a coordination point for ATP. The short motif at D348–D351 is the DEAD box element. In terms of domain architecture, Helicase C-terminal spans Y438–R589.

The protein belongs to the DEAD box helicase family. DDX49/DBP8 subfamily.

It localises to the nucleus. The protein localises to the nucleolus. It catalyses the reaction ATP + H2O = ADP + phosphate + H(+). In terms of biological role, ATP-binding RNA helicase involved in 40S ribosomal subunit biogenesis and is required for the normal formation of 18S rRNAs through pre-rRNA processing at A0, A1 and A2 sites. Required for vegetative growth. The sequence is that of ATP-dependent RNA helicase dbp-8 (dbp-8) from Neurospora crassa (strain ATCC 24698 / 74-OR23-1A / CBS 708.71 / DSM 1257 / FGSC 987).